Reading from the N-terminus, the 467-residue chain is Argininosuccinate lyase (467 aa).

This sequence belongs to the lyase 1 family. Argininosuccinate lyase subfamily.

The protein localises to the cytoplasm. It carries out the reaction 2-(N(omega)-L-arginino)succinate = fumarate + L-arginine. The protein operates within amino-acid biosynthesis; L-arginine biosynthesis; L-arginine from L-ornithine and carbamoyl phosphate: step 3/3. The sequence is that of Argininosuccinate lyase from Rhizobium johnstonii (strain DSM 114642 / LMG 32736 / 3841) (Rhizobium leguminosarum bv. viciae).